A 372-amino-acid polypeptide reads, in one-letter code: Transaldolase 2 (372 aa).

The Schiff-base intermediate with substrate role is filled by Lys140.

It belongs to the transaldolase family. Type 2 subfamily.

It localises to the cytoplasm. The enzyme catalyses D-sedoheptulose 7-phosphate + D-glyceraldehyde 3-phosphate = D-erythrose 4-phosphate + beta-D-fructose 6-phosphate. It participates in carbohydrate degradation; pentose phosphate pathway; D-glyceraldehyde 3-phosphate and beta-D-fructose 6-phosphate from D-ribose 5-phosphate and D-xylulose 5-phosphate (non-oxidative stage): step 2/3. In terms of biological role, transaldolase is important for the balance of metabolites in the pentose-phosphate pathway. The sequence is that of Transaldolase 2 from Streptomyces coelicolor (strain ATCC BAA-471 / A3(2) / M145).